Consider the following 381-residue polypeptide: Cyclin-dependent kinase inhibitor CIP1 (381 aa).

Over residues 1 to 11 (MLLERLHKRLH) the composition is skewed to basic residues. The interval 1 to 30 (MLLERLHKRLHAGSSRRSQENKDKNCKPED) is disordered. Residues 17-30 (RSQENKDKNCKPED) are compositionally biased toward basic and acidic residues. Phosphothreonine is present on residues threonine 65, threonine 69, and threonine 73.

As to quaternary structure, interact with the CDC28/CLN2 complex. In terms of processing, phosphorylated during S phase in a CDC28-dependent manner. Phosphorylated at Thr-65 and Thr-73 by HOG1 under osmotic stress. The phosphorylations of Thr-65 and Thr-73 are necessary for CIP1-induced growth inhibition.

Its subcellular location is the cytoplasm. The protein resides in the nucleus. In terms of biological role, acts as an inhibitor of the CDC28/CLN2 cyclin-dependent kinase complex. Stabilizes the CDC28 inhibitor SIC1. Negatively regulates the G1/S phase transition. Contributes to osmostress-induced transitory G1 delay. This Saccharomyces cerevisiae (strain ATCC 204508 / S288c) (Baker's yeast) protein is Cyclin-dependent kinase inhibitor CIP1.